The primary structure comprises 31 residues: Cytochrome b6-f complex subunit 6 (31 aa).

Residues 5–25 form a helical membrane-spanning segment; it reads ISYLGILVGALLFVTITFLTL.

This sequence belongs to the PetL family. As to quaternary structure, the 4 large subunits of the cytochrome b6-f complex are cytochrome b6, subunit IV (17 kDa polypeptide, PetD), cytochrome f and the Rieske protein, while the 4 small subunits are PetG, PetL, PetM and PetN. The complex functions as a dimer.

The protein localises to the plastid. It localises to the chloroplast thylakoid membrane. In terms of biological role, component of the cytochrome b6-f complex, which mediates electron transfer between photosystem II (PSII) and photosystem I (PSI), cyclic electron flow around PSI, and state transitions. PetL is important for photoautotrophic growth as well as for electron transfer efficiency and stability of the cytochrome b6-f complex. This is Cytochrome b6-f complex subunit 6 from Chlorokybus atmophyticus (Soil alga).